The sequence spans 657 residues: Pyoverdine export ATP-binding/permease protein PvdT (657 aa).

Residues 6 to 245 form the ABC transporter domain; sequence IDLRGIRKSY…RSVNPAALQA (240 aa). 43 to 50 is a binding site for ATP; sequence GASGSGKS. 4 helical membrane passes run 285 to 305, 539 to 559, 590 to 610, and 620 to 640; these read ALTL…LAVG, IAAI…LMTV, LSVV…AALL, and LPAV…FGFM.

The protein belongs to the ABC transporter superfamily. Macrolide exporter (TC 3.A.1.122) family. In terms of assembly, part of the tripartite efflux system PvdRT-OpmQ, which is composed of an inner membrane component with both ATPase and permease domains, PvdT, a periplasmic membrane fusion protein, PvdR, and an outer membrane component, OpmQ.

The protein localises to the cell inner membrane. Part of the tripartite efflux system PvdRT-OpmQ required for the secretion into the extracellular milieu of the siderophore pyoverdine (PVD), which is involved in iron acquisition. This subunit binds PVD and drives its secretion by hydrolyzing ATP. The system is responsible for export of newly synthesized PVD after the final steps of biosynthesis have taken place in the periplasm. It is also responsible for recycling of PVD after internalization of ferri-PVD into the periplasm by the outer-membrane receptor FpvA and release of iron from PVD, thus making PVD available for new cycles of iron uptake. In Pseudomonas syringae pv. syringae (strain B728a), this protein is Pyoverdine export ATP-binding/permease protein PvdT.